The chain runs to 96 residues: Prokineticin Bv8 (96 aa).

The signal sequence occupies residues 1–19; that stretch reads MKCFAQIVVLLLVIAFSHG. The may be important for binding to prokineticin receptor 2 stretch occupies residues 20–24; that stretch reads AVITG. 5 cysteine pairs are disulfide-bonded: cysteine 26–cysteine 38, cysteine 32–cysteine 50, cysteine 37–cysteine 78, cysteine 60–cysteine 86, and cysteine 80–cysteine 95.

In terms of tissue distribution, expressed by the skin glands.

The protein resides in the secreted. Potent agonist for both PKR1/PROKR1 and PKR2/PROKR2, and inducer of a potent and long-lasting hyperalgesia. Shows an EC(50) of 0.264 nM, when tested on neuroblastoma cells (SH-SY5Y) which endogenously express mainly PKR2/PROKR2. Also potentiates capsaicin-induced TRPV1 current, when tested on DRG neurons. Induces a biphasic hyperalgesia to tactile and thermal stimuli after systemic injection of this protein into rat. The initial phase of hyperalgesia is caused by a local action on nociceptors, because intraplantar injection of this protein causes a strong and localized hyperalgesia with a similar time course to that of the initial phase of hyperalgesia seen with systemic injection. The secondary phase of hyperalgesia is not seen with local intraplantar injection and is therefore probably attributable to a central action of this protein. At subnanomolar concentrations, this protein both induces potent chemotaxis of macrophages and stimulates LPS-induced production of the pro-inflammatory cytokines IL-1 and IL-12. In vivo, this protein potently stimulates the contraction of the guinea-pig gastrointestinal (GI) smooth muscle (at nanomolar concentration). The chain is Prokineticin Bv8 from Bombina variegata (Yellow-bellied toad).